Here is a 512-residue protein sequence, read N- to C-terminus: Norfluorocurarine oxidase (512 aa).

The helical transmembrane segment at 3–23 (LLLNPSLFSLLPLLLFIIFLF) threads the bilayer. Residue C453 coordinates heme.

It belongs to the cytochrome P450 family. The cofactor is heme.

The protein localises to the membrane. The catalysed reaction is norfluorocurarine + reduced [NADPH--hemoprotein reductase] + O2 = 18-hydroxynorfluorocurarine + oxidized [NADPH--hemoprotein reductase] + H2O + H(+). The protein operates within alkaloid biosynthesis. Its function is as follows. Monooxygenase involved in the biosynthesis of curare monoterpene indole alkaloids (MIAs), natural products such as diaboline, a pharmacologically active compound used to regulate blood pressure. Curare alkaloids act as animal glycine receptor antagonists. Catalyzes the conversion of norfluorocurarine to 18-OH norfluorocurarine. The polypeptide is Norfluorocurarine oxidase (Strychnos sp).